Here is a 270-residue protein sequence, read N- to C-terminus: Undecaprenyl-diphosphatase 1 (270 aa).

A run of 6 helical transmembrane segments spans residues 79 to 99, 105 to 125, 155 to 175, 182 to 202, 215 to 235, and 242 to 262; these read NLLL…LLFS, VLFN…IILW, LALI…LFLG, TEFS…YSLI, VFAV…RALL, and SFAV…GTWW.

Belongs to the UppP family.

The protein resides in the cell inner membrane. The enzyme catalyses di-trans,octa-cis-undecaprenyl diphosphate + H2O = di-trans,octa-cis-undecaprenyl phosphate + phosphate + H(+). In terms of biological role, catalyzes the dephosphorylation of undecaprenyl diphosphate (UPP). Confers resistance to bacitracin. This Chromobacterium violaceum (strain ATCC 12472 / DSM 30191 / JCM 1249 / CCUG 213 / NBRC 12614 / NCIMB 9131 / NCTC 9757 / MK) protein is Undecaprenyl-diphosphatase 1.